The primary structure comprises 592 residues: Cytosolic purine 5'-nucleotidase (592 aa).

Residues 1-15 (MAENNNNNNNNNNNN) are compositionally biased toward low complexity. The disordered stretch occupies residues 1–37 (MAENNNNNNNNNNNNVSTPPHQKPHLTTGLRTSSSGL). Residue aspartate 122 is the Nucleophile of the active site. The IMP site is built by aspartate 122 and aspartate 124. Positions 122 and 124 each coordinate Mg(2+). Aspartate 124 serves as the catalytic Proton donor. Asparagine 226 contacts ATP. Residues 252–273 (LTEEVADEQQQMNSPPLSSLGS) form a disordered region. Over residues 259 to 273 (EQQQMNSPPLSSLGS) the composition is skewed to polar residues. IMP contacts are provided by arginine 299, aspartate 303, lysine 312, threonine 347, asparagine 348, serine 349, and lysine 385. Aspartate 444 contacts Mg(2+). Residues glutamine 547 and arginine 550 each coordinate ATP.

This sequence belongs to the 5'(3')-deoxyribonucleotidase family. Homotetramer. The cofactor is Mg(2+).

The protein localises to the cytoplasm. Its subcellular location is the cytosol. The catalysed reaction is a ribonucleoside 5'-phosphate + H2O = a ribonucleoside + phosphate. It carries out the reaction a 2'-deoxyribonucleoside + a ribonucleoside 5'-phosphate = a ribonucleoside + a 2'-deoxyribonucleoside 5'-phosphate. Functionally, broad specificity cytosolic 5'-nucleotidase that catalyzes the dephosphorylation of 6-hydroxypurine nucleoside 5'-monophosphates. In addition, possesses a phosphotransferase activity by which it can transfer a phosphate from a donor nucleoside monophosphate to an acceptor nucleoside. Through these activities regulates the purine nucleoside/nucleotide pools within the cell. The polypeptide is Cytosolic purine 5'-nucleotidase (nt5c2) (Dictyostelium discoideum (Social amoeba)).